A 478-amino-acid chain; its full sequence is Glycogen synthase (478 aa).

Lys15 is a binding site for ADP-alpha-D-glucose.

It belongs to the glycosyltransferase 1 family. Bacterial/plant glycogen synthase subfamily.

The enzyme catalyses [(1-&gt;4)-alpha-D-glucosyl](n) + ADP-alpha-D-glucose = [(1-&gt;4)-alpha-D-glucosyl](n+1) + ADP + H(+). It participates in glycan biosynthesis; glycogen biosynthesis. In terms of biological role, synthesizes alpha-1,4-glucan chains using ADP-glucose. The sequence is that of Glycogen synthase from Clostridium botulinum (strain Eklund 17B / Type B).